Reading from the N-terminus, the 352-residue chain is Biotin synthase (352 aa).

Residues Asn44–Lys262 enclose the Radical SAM core domain. Residues Cys59, Cys63, and Cys66 each coordinate [4Fe-4S] cluster. 4 residues coordinate [2Fe-2S] cluster: Cys103, Cys134, Cys194, and Arg266.

Belongs to the radical SAM superfamily. Biotin synthase family. In terms of assembly, homodimer. [4Fe-4S] cluster serves as cofactor. [2Fe-2S] cluster is required as a cofactor.

The enzyme catalyses (4R,5S)-dethiobiotin + (sulfur carrier)-SH + 2 reduced [2Fe-2S]-[ferredoxin] + 2 S-adenosyl-L-methionine = (sulfur carrier)-H + biotin + 2 5'-deoxyadenosine + 2 L-methionine + 2 oxidized [2Fe-2S]-[ferredoxin]. Its pathway is cofactor biosynthesis; biotin biosynthesis; biotin from 7,8-diaminononanoate: step 2/2. In terms of biological role, catalyzes the conversion of dethiobiotin (DTB) to biotin by the insertion of a sulfur atom into dethiobiotin via a radical-based mechanism. This Pseudomonas aeruginosa (strain LESB58) protein is Biotin synthase.